A 1381-amino-acid polypeptide reads, in one-letter code: MAERANLVFHNKVIDGTAIKRLISRLIDHFGMAYTSHILDQVKTLGFQQATATSISLGIDDLLTIPSKGWLVQDAEQQSLILEKHHHYGNVHAVEKLRQSIEIWYATSEYLRQEMNPNFRMTDPFNPVHMMSFSGARGNASQVHQLVGMRGLMSDPQGQMIDLPIQSNLREGLSLTEYIISCYGARKGVVDTAVRTSDAGYLTRRLVEVVQHIVVRRTDCGTIRGISVSPRNKNRMMSERIFIQTLIGRVLADDIYIGSRCVAFRNQDLGIGLVNRFITFGTQSISIRTPFTCRSTSWICRLCYGRSPTHGDLVELGEAVGIIAGQSIGEPGTQLTLRTFHTGGVFTGGTAEHVRAPYNGKIKFNEDLVHPTRTRHGHPAFLCYIDLSVIIESDDIIHNVTIPPKSFLLVQNDQYVESEQVIAEIREGASTFHFKERVRKYIYSGSEGEMHWSTDVSHAPEFTYSNVHLLPKTSHLWILSGGSCGSSLIRFSIHKDQDQMNIPFLSAQIKSISSLSVNNDQVSQKFCSSDFYDKKKSGITDYSELNGIVGTSHYNFIYSTIFHENSDLLAKRRRNRFLIPFQSIQEQEKEFIRHSGISIEIPINGIFRRNSIFAFFDDPRYRRKSSGILKYGTLRADSIIQKEDMIEYRGGQKFKTKYEMKVDRFFFIPEEVHILPESSVIMVQNYSIIGVNTRITLNIRSQVGGLIRVERKKKRIELKIFSGDIHFPDKTDKISRHSGILIPPGRGKTNPKESKKLKNWIYVQRITPTKKKFFVLVRPVGTYEIANSINLATLFPQDLFREKDNIELRVFNYILYGNGKPTRGISDTSIQLVRTCLVLNWDQDTKNSSLEEVRAFFIEVSTKGLIRDFIRIGLVKSHISYIRKRNNPPDSGLISADHINPFYSISPKAFILQQSLRQNHGTVRMFLNSNKESPSLLILSSSNCFRIGLFNHVKYHNVINQSIKKNPLITIKNSSGPLGTAIQISNCYSFLPLLTYNKISAIKYLQLDKVKYSFQVINSYLIDENGRSFNLDRYSNGVLNPLKLNWYFLHQNYYHNYCEETSTIISLGQFFCENLCIAKKEPHLKSGQVLIVQKDSIVIRSAKPYLATPGAKVHGHYREILYEGDTLVTFIYEKSRSGDITQGLPKVEQVLEVRSIDSISLNLEKRIKGWNKCITRILGIPWGFLIGAELTIVQSRISLVNKIQKVYRSQGVQIHNRHIEIIVRQITSKVLVSEEGMSNVFLPGELIGLLRAERTGRALEEAICYRAILLGITRASLNTQSFISEASFQETARVLAKAALRGRIDWLKGLKENVVLGGMIPAGTGFNKGLVHCSRQHTNTLLEKRTKNLSLFEGDMKDILFYHREFFDSSISISKSSFSRI.

Zn(2+) contacts are provided by C220, C293, C300, and C303.

This sequence belongs to the RNA polymerase beta' chain family. RpoC2 subfamily. As to quaternary structure, in plastids the minimal PEP RNA polymerase catalytic core is composed of four subunits: alpha, beta, beta', and beta''. When a (nuclear-encoded) sigma factor is associated with the core the holoenzyme is formed, which can initiate transcription. The cofactor is Zn(2+).

The protein resides in the plastid. The protein localises to the chloroplast. The enzyme catalyses RNA(n) + a ribonucleoside 5'-triphosphate = RNA(n+1) + diphosphate. Functionally, DNA-dependent RNA polymerase catalyzes the transcription of DNA into RNA using the four ribonucleoside triphosphates as substrates. This is DNA-directed RNA polymerase subunit beta'' from Draba nemorosa (Woodland whitlowgrass).